The chain runs to 265 residues: Transcription factor LBX1b (265 aa).

Positions 121–180 (RRKSRTAFTNHQLYELEKRFLHQKYLSPADRDQIAHQLGLTNAQVITWFQNRRAKLKRDL) form a DNA-binding region, homeobox.

The protein localises to the nucleus. In terms of biological role, transcription factor required for the development of hypaxial muscles. This Danio rerio (Zebrafish) protein is Transcription factor LBX1b.